The following is a 286-amino-acid chain: Bifunctional protein FolD (286 aa).

NADP(+)-binding positions include 168 to 170 (GRG), Thr-195, and Val-236.

It belongs to the tetrahydrofolate dehydrogenase/cyclohydrolase family. Homodimer.

The catalysed reaction is (6R)-5,10-methylene-5,6,7,8-tetrahydrofolate + NADP(+) = (6R)-5,10-methenyltetrahydrofolate + NADPH. The enzyme catalyses (6R)-5,10-methenyltetrahydrofolate + H2O = (6R)-10-formyltetrahydrofolate + H(+). It functions in the pathway one-carbon metabolism; tetrahydrofolate interconversion. Its function is as follows. Catalyzes the oxidation of 5,10-methylenetetrahydrofolate to 5,10-methenyltetrahydrofolate and then the hydrolysis of 5,10-methenyltetrahydrofolate to 10-formyltetrahydrofolate. The polypeptide is Bifunctional protein FolD (Mycolicibacterium fortuitum (Mycobacterium fortuitum)).